Here is a 291-residue protein sequence, read N- to C-terminus: Ribosomal RNA small subunit methyltransferase A (291 aa).

S-adenosyl-L-methionine-binding residues include Asn29, Leu31, Gly56, Glu77, Asp102, and Asn127.

This sequence belongs to the class I-like SAM-binding methyltransferase superfamily. rRNA adenine N(6)-methyltransferase family. RsmA subfamily.

The protein resides in the cytoplasm. The catalysed reaction is adenosine(1518)/adenosine(1519) in 16S rRNA + 4 S-adenosyl-L-methionine = N(6)-dimethyladenosine(1518)/N(6)-dimethyladenosine(1519) in 16S rRNA + 4 S-adenosyl-L-homocysteine + 4 H(+). Specifically dimethylates two adjacent adenosines (A1518 and A1519) in the loop of a conserved hairpin near the 3'-end of 16S rRNA in the 30S particle. May play a critical role in biogenesis of 30S subunits. The polypeptide is Ribosomal RNA small subunit methyltransferase A (Geobacillus sp. (strain WCH70)).